The following is a 658-amino-acid chain: Zinc finger protein 135 (658 aa).

One can recognise a KRAB domain in the interval 14-85; it reads VTFEDVVVGF…ESRLPQGVYP (72 aa). Residues 171–196 form a disordered region; the sequence is LNPDLPHQPMTPERQSPHTWGTRGKR. 16 consecutive C2H2-type zinc fingers follow at residues 214-236, 242-264, 270-292, 298-320, 326-348, 354-376, 382-404, 410-432, 438-460, 466-488, 494-516, 522-544, 550-572, 578-600, 606-628, and 634-656; these read YKCQ…HRTH, YECH…QRIH, YKCT…QRTH, YECS…ERTH, YECS…LRIH, YQCG…QRIH, YECH…QRTH, YECG…RRIH, YGCN…ERTH, YECS…QRIH, YECN…QRIH, YECH…RRIH, and YACR…QRTH.

It belongs to the krueppel C2H2-type zinc-finger protein family.

It is found in the nucleus. In terms of biological role, plays a role in the regulation of cell morphology and cytoskeletal organization. May be involved in transcriptional regulation. The polypeptide is Zinc finger protein 135 (ZNF135) (Homo sapiens (Human)).